The following is a 325-amino-acid chain: ATP synthase subunit gamma, mitochondrial (325 aa).

A mitochondrion-targeting transit peptide spans 1 to 42 (MAMAVFRREGRRLLPSIAARPIAAIRSPLSSDQEEGLLGVRS).

Belongs to the ATPase gamma chain family. In terms of assembly, F-type ATPases have 2 components, CF(1) - the catalytic core - and CF(0) - the membrane proton channel. CF(1) has five subunits: alpha(3), beta(3), gamma(1), delta(1), epsilon(1). CF(0) has three main subunits: a, b and c.

It is found in the mitochondrion. Its subcellular location is the mitochondrion inner membrane. Mitochondrial membrane ATP synthase (F(1)F(0) ATP synthase or Complex V) produces ATP from ADP in the presence of a proton gradient across the membrane which is generated by electron transport complexes of the respiratory chain. F-type ATPases consist of two structural domains, F(1) - containing the extramembraneous catalytic core, and F(0) - containing the membrane proton channel, linked together by a central stalk and a peripheral stalk. During catalysis, ATP synthesis in the catalytic domain of F(1) is coupled via a rotary mechanism of the central stalk subunits to proton translocation. Part of the complex F(1) domain and the central stalk which is part of the complex rotary element. The gamma subunit protrudes into the catalytic domain formed of alpha(3)beta(3). Rotation of the central stalk against the surrounding alpha(3)beta(3) subunits leads to hydrolysis of ATP in three separate catalytic sites on the beta subunits. The chain is ATP synthase subunit gamma, mitochondrial (ATPC) from Arabidopsis thaliana (Mouse-ear cress).